The chain runs to 549 residues: Maturase K (549 aa).

Belongs to the intron maturase 2 family. MatK subfamily.

Its subcellular location is the plastid. The protein resides in the chloroplast. In terms of biological role, usually encoded in the trnK tRNA gene intron. Probably assists in splicing its own and other chloroplast group II introns. The protein is Maturase K of Albidella oligococca (Caldesia oligococca).